The sequence spans 268 residues: Bidirectional sugar transporter N3 (268 aa).

The Extracellular portion of the chain corresponds to M1–T7. The helical transmembrane segment at L8–I28 threads the bilayer. Positions F10–D96 constitute a MtN3/slv 1 domain. Residues S29 to G42 are Cytoplasmic-facing. A helical transmembrane segment spans residues F43–L63. Residues L64–L70 are Extracellular-facing. Residues L71–I91 traverse the membrane as a helical segment. Topologically, residues Y92–K103 are cytoplasmic. A helical transmembrane segment spans residues L104–V124. The Extracellular segment spans residues H125–Q131. The MtN3/slv 2 domain occupies Q131–N214. Residues V132–V152 form a helical membrane-spanning segment. At A153–P165 the chain is on the cytoplasmic side. The chain crosses the membrane as a helical span at residues F166–L186. The Extracellular portion of the chain corresponds to K187 to C190. The helical transmembrane segment at I191–I211 threads the bilayer. Over Y212–V268 the chain is Cytoplasmic. The stretch at I234–E262 forms a coiled coil. Positions I243–E262 are enriched in basic and acidic residues. Residues I243–V268 form a disordered region.

It belongs to the SWEET sugar transporter family. Forms homooligomers and/or heterooligomers.

It is found in the cell membrane. Functionally, mediates both low-affinity uptake and efflux of sugar across the plasma membrane. The chain is Bidirectional sugar transporter N3 (N3) from Medicago truncatula (Barrel medic).